The sequence spans 725 residues: IML2-like protein YKR018C (725 aa).

At Thr-196 the chain carries Phosphothreonine. A phosphoserine mark is found at Ser-246, Ser-377, and Ser-380.

It belongs to the IML2 family.

The protein resides in the cytoplasm. It localises to the nucleus. In Saccharomyces cerevisiae (strain ATCC 204508 / S288c) (Baker's yeast), this protein is IML2-like protein YKR018C.